The sequence spans 425 residues: Glutamyl-tRNA reductase (425 aa).

Substrate-binding positions include 49–52 (TCNR), S109, 114–116 (EGQ), and Q120. The Nucleophile role is filled by C50. 189–194 (GAGKMS) provides a ligand contact to NADP(+).

It belongs to the glutamyl-tRNA reductase family. Homodimer.

It catalyses the reaction (S)-4-amino-5-oxopentanoate + tRNA(Glu) + NADP(+) = L-glutamyl-tRNA(Glu) + NADPH + H(+). It participates in porphyrin-containing compound metabolism; protoporphyrin-IX biosynthesis; 5-aminolevulinate from L-glutamyl-tRNA(Glu): step 1/2. Its pathway is porphyrin-containing compound metabolism; chlorophyll biosynthesis. Functionally, catalyzes the NADPH-dependent reduction of glutamyl-tRNA(Glu) to glutamate 1-semialdehyde (GSA). In Picosynechococcus sp. (strain ATCC 27264 / PCC 7002 / PR-6) (Agmenellum quadruplicatum), this protein is Glutamyl-tRNA reductase.